Consider the following 204-residue polypeptide: N-(5'-phosphoribosyl)anthranilate isomerase (204 aa).

It belongs to the TrpF family.

The catalysed reaction is N-(5-phospho-beta-D-ribosyl)anthranilate = 1-(2-carboxyphenylamino)-1-deoxy-D-ribulose 5-phosphate. It functions in the pathway amino-acid biosynthesis; L-tryptophan biosynthesis; L-tryptophan from chorismate: step 3/5. The chain is N-(5'-phosphoribosyl)anthranilate isomerase from Syntrophomonas wolfei subsp. wolfei (strain DSM 2245B / Goettingen).